Consider the following 385-residue polypeptide: Type III polyketide synthase C (385 aa).

56–63 (KLQHLCKS) contributes to the CoA binding site. Cys165 functions as the Nucleophile in the catalytic mechanism. Residue 217–218 (GD) participates in substrate binding. CoA contacts are provided by residues Leu267, 307-310 (GGPA), and Ala310.

It belongs to the thiolase-like superfamily. Chalcone/stilbene synthases family. Homodimer.

The protein localises to the endoplasmic reticulum. It participates in secondary metabolite biosynthesis; flavonoid biosynthesis. In terms of biological role, plant type III polyketide synthases (PKSs) that catalyzes the condensation of malonyl-CoA units with various CoA ester starter molecules to generate a diverse array of natural products including long-chain alkyl alpha-pyrones. This is Type III polyketide synthase C from Arabidopsis thaliana (Mouse-ear cress).